Here is an 89-residue protein sequence, read N- to C-terminus: Cell division protein FtsL (89 aa).

Residues Met-1–Leu-6 are Cytoplasmic-facing. A helical transmembrane segment spans residues Asn-7–Gln-24. Topologically, residues Gln-25–Arg-89 are periplasmic. Positions Thr-33–Asn-73 form a coiled coil.

This sequence belongs to the FtsL family. As to quaternary structure, part of a complex composed of FtsB, FtsL and FtsQ.

Its subcellular location is the cell inner membrane. Functionally, essential cell division protein. May link together the upstream cell division proteins, which are predominantly cytoplasmic, with the downstream cell division proteins, which are predominantly periplasmic. This Neisseria meningitidis serogroup B (strain ATCC BAA-335 / MC58) protein is Cell division protein FtsL.